The chain runs to 377 residues: Probable staphylococcal-like nuclease CAN3 (377 aa).

A lipid anchor (N-myristoyl glycine) is attached at glycine 2. Cysteine 7 carries the S-palmitoyl cysteine lipid modification. The segment at 15–57 is disordered; sequence GDHYPYYKPTSRPHYQPPHYHGQPAAPPAPPQQQPLGPHGVTP. Over residues 27 to 38 the composition is skewed to low complexity; the sequence is PHYQPPHYHGQP. The 177-residue stretch at 177–353 folds into the TNase-like domain; the sequence is NTLPVYDKCI…KAANRGLWAS (177 aa). Aspartate 190 lines the Ca(2+) pocket. The active site involves arginine 260. Aspartate 265 provides a ligand contact to Ca(2+). Catalysis depends on residues glutamate 268 and arginine 302.

It belongs to the thermonuclease family. Ca(2+) is required as a cofactor.

It localises to the cell membrane. Functionally, enzyme that catalyzes the hydrolysis of both DNA and RNA at the 5' position of the phosphodiester bond. This is Probable staphylococcal-like nuclease CAN3 from Oryza sativa subsp. japonica (Rice).